We begin with the raw amino-acid sequence, 280 residues long: 2,3,4,5-tetrahydropyridine-2,6-dicarboxylate N-succinyltransferase (280 aa).

The protein belongs to the transferase hexapeptide repeat family.

It is found in the cytoplasm. It catalyses the reaction (S)-2,3,4,5-tetrahydrodipicolinate + succinyl-CoA + H2O = (S)-2-succinylamino-6-oxoheptanedioate + CoA. It functions in the pathway amino-acid biosynthesis; L-lysine biosynthesis via DAP pathway; LL-2,6-diaminopimelate from (S)-tetrahydrodipicolinate (succinylase route): step 1/3. The polypeptide is 2,3,4,5-tetrahydropyridine-2,6-dicarboxylate N-succinyltransferase (Methylorubrum extorquens (strain PA1) (Methylobacterium extorquens)).